Reading from the N-terminus, the 793-residue chain is Putative dipeptidyl aminopeptidase C2E11.08 (793 aa).

The Cytoplasmic segment spans residues 1–24; sequence MNDFSFEDKGLISRSGFGSRHVRR. A helical; Signal-anchor for type II membrane protein transmembrane segment spans residues 25–45; the sequence is VVKALALIFSLLILYLTISNV. The Lumenal segment spans residues 46–793; that stretch reads SDSPPKRDSL…STGVRQHRWD (748 aa). N101, N136, N246, N299, N303, N324, N336, N377, N384, N407, and N535 each carry an N-linked (GlcNAc...) asparagine glycan. Active-site charge relay system residues include S647, D722, and H755. N761 is a glycosylation site (N-linked (GlcNAc...) asparagine).

Belongs to the peptidase S9B family.

It is found in the vacuole membrane. This chain is Putative dipeptidyl aminopeptidase C2E11.08, found in Schizosaccharomyces pombe (strain 972 / ATCC 24843) (Fission yeast).